Reading from the N-terminus, the 184-residue chain is Phosphodiesterase YfcE (184 aa).

Mn(2+) is bound by residues aspartate 9, histidine 11, aspartate 37, asparagine 73, histidine 105, histidine 127, and histidine 129.

It belongs to the metallophosphoesterase superfamily. YfcE family. It depends on Mn(2+) as a cofactor.

Shows phosphodiesterase activity. The protein is Phosphodiesterase YfcE (yfcE) of Escherichia coli O157:H7.